The primary structure comprises 257 residues: 3-deoxy-manno-octulosonate cytidylyltransferase (257 aa).

Belongs to the KdsB family.

Its subcellular location is the cytoplasm. It catalyses the reaction 3-deoxy-alpha-D-manno-oct-2-ulosonate + CTP = CMP-3-deoxy-beta-D-manno-octulosonate + diphosphate. Its pathway is nucleotide-sugar biosynthesis; CMP-3-deoxy-D-manno-octulosonate biosynthesis; CMP-3-deoxy-D-manno-octulosonate from 3-deoxy-D-manno-octulosonate and CTP: step 1/1. The protein operates within bacterial outer membrane biogenesis; lipopolysaccharide biosynthesis. In terms of biological role, activates KDO (a required 8-carbon sugar) for incorporation into bacterial lipopolysaccharide in Gram-negative bacteria. The sequence is that of 3-deoxy-manno-octulosonate cytidylyltransferase from Xylella fastidiosa (strain M23).